The primary structure comprises 417 residues: Gamma-glutamyl phosphate reductase (417 aa).

The protein belongs to the gamma-glutamyl phosphate reductase family.

It localises to the cytoplasm. The catalysed reaction is L-glutamate 5-semialdehyde + phosphate + NADP(+) = L-glutamyl 5-phosphate + NADPH + H(+). Its pathway is amino-acid biosynthesis; L-proline biosynthesis; L-glutamate 5-semialdehyde from L-glutamate: step 2/2. In terms of biological role, catalyzes the NADPH-dependent reduction of L-glutamate 5-phosphate into L-glutamate 5-semialdehyde and phosphate. The product spontaneously undergoes cyclization to form 1-pyrroline-5-carboxylate. The protein is Gamma-glutamyl phosphate reductase of Escherichia coli O45:K1 (strain S88 / ExPEC).